We begin with the raw amino-acid sequence, 312 residues long: MENYNQTSTDFILLGFFPPSRIGLFLFILIVFIFLMALIGNLSMILLIFLDTHLHTPMYFLLSQLSLIDLNYISTIVPKMASDFLSGNKSISFTGCGIQSFFFSALGGAEALLLASMAYDRYIAICFPLHYPIRMSKRMCVLMITGSWIIGSINACAHTVYVLHIPYCQSRAINHFFCDVPAMVTLACMDTWVYEGTVFLSTTIFLVFPFIAISCSYGRVLLAVYHMKSAEGRKKAYLTCSTHLTVVTFYYAPFVYTYLRPRSLRSPTEDKVLAVFYTTLTPMLNPIIYSLRNKEVMGALTRVSQRICSGKM.

At 1-24 the chain is on the extracellular side; it reads MENYNQTSTDFILLGFFPPSRIGL. N-linked (GlcNAc...) asparagine glycosylation occurs at asparagine 5. The helical transmembrane segment at 25–48 threads the bilayer; the sequence is FLFILIVFIFLMALIGNLSMILLI. Residues 49 to 56 are Cytoplasmic-facing; that stretch reads FLDTHLHT. The chain crosses the membrane as a helical span at residues 57 to 78; it reads PMYFLLSQLSLIDLNYISTIVP. Topologically, residues 79-99 are extracellular; it reads KMASDFLSGNKSISFTGCGIQ. Asparagine 88 carries an N-linked (GlcNAc...) asparagine glycan. An intrachain disulfide couples cysteine 96 to cysteine 188. A helical transmembrane segment spans residues 100 to 119; sequence SFFFSALGGAEALLLASMAY. The Cytoplasmic portion of the chain corresponds to 120–138; sequence DRYIAICFPLHYPIRMSKR. Residues 139 to 157 form a helical membrane-spanning segment; it reads MCVLMITGSWIIGSINACA. Residues 158-194 lie on the Extracellular side of the membrane; that stretch reads HTVYVLHIPYCQSRAINHFFCDVPAMVTLACMDTWVY. The helical transmembrane segment at 195-218 threads the bilayer; it reads EGTVFLSTTIFLVFPFIAISCSYG. Residues 219–235 are Cytoplasmic-facing; it reads RVLLAVYHMKSAEGRKK. Residues 236 to 258 traverse the membrane as a helical segment; the sequence is AYLTCSTHLTVVTFYYAPFVYTY. At 259-271 the chain is on the extracellular side; sequence LRPRSLRSPTEDK. Residues 272–291 traverse the membrane as a helical segment; sequence VLAVFYTTLTPMLNPIIYSL. Over 292-312 the chain is Cytoplasmic; that stretch reads RNKEVMGALTRVSQRICSGKM.

This sequence belongs to the G-protein coupled receptor 1 family.

The protein resides in the cell membrane. In terms of biological role, odorant receptor. The sequence is that of Olfactory receptor 2L3 (OR2L3) from Homo sapiens (Human).